Consider the following 234-residue polypeptide: Core atranone cluster (CAC) protein 1 (234 aa).

It functions in the pathway mycotoxin biosynthesis. Its function is as follows. Part of the core atranone cluster (CAC) which products are predicted to catalyze most or all steps of mycotoxin atranone synthesis, starting from geranylgeranyl pyrophosphate (GGPP). The initial cyclization of GGPP to dolabellane is probably performed by the terpene cyclase ATR13. The Baeyer-Villiger oxidation near the end of the atranone synthesis, which converts atranones D and E to atranones F and G is predicted to be catalyzed by the monooxygenase ATR8. Of the CAC's other predicted gene products, the reducing PKS ATR6 might synthesize a polyketide chain. This polyketide is probably transferred onto the atranone backbone by the polyketide transferase ATR5. Other predicted CAC products include 4 oxygenases (ATR2, ATR3, ATR4, and ATR14), 3 short-chain reductases (ATR7, ATR9, and ATR10), and a methyltransferase (ATR12). These may all be involved in the various steps of atranone biosynthesis, although their specific roles must await experimental determination. The sequence is that of Core atranone cluster (CAC) protein 1 from Stachybotrys chlorohalonatus (strain IBT 40285).